A 575-amino-acid polypeptide reads, in one-letter code: Transcription factor E3 (575 aa).

The residue at position 47 (S47) is a Phosphoserine; by MTOR. The span at 90-126 shows a compositional bias: low complexity; the sequence is ATLSASSSAGGSRTPAMSSSSSSRVLLRQQLMRAQAQ. A disordered region spans residues 90-153; sequence ATLSASSSAG…SPAPASPAIS (64 aa). Residues 127 to 136 are compositionally biased toward basic and acidic residues; it reads EQERRERREQ. Asymmetric dimethylarginine is present on R188. Residues 211-246 are disordered; it reads LASQALTPPPGPASAQPLPAPEAAHTTGPTGSAPNS. Residues 260 to 271 form a strong transcription activation domain region; the sequence is EIDDVIDEIISL. Position 321 is a phosphoserine; by MTOR (S321). K339 participates in a covalent cross-link: Glycyl lysine isopeptide (Lys-Gly) (interchain with G-Cter in SUMO2). A bHLH domain is found at 346–399; sequence QKKDNHNLIERRRRFNINDRIKELGTLIPKSSDPEMRWNKGTILKASVDYIRKL. Positions 356–359 match the Nuclear localization signal motif; it reads RRRR. Residues 409–430 form a leucine-zipper region; the sequence is LESRQRSLEQANRSLQLRIQEL. Disordered stretches follow at residues 473–498 and 534–575; these read GAAT…PPSD and GGLS…EEES. Positions 539-575 are enriched in low complexity; the sequence is GALSPLRAASDPLLSSVSPAVSKASSRRSSFSMEEES. A phosphoserine mark is found at S542, S548, S554, S556, S560, and S568.

Belongs to the MiT/TFE family. In terms of assembly, homodimer and heterodimer; with TFEB or MITF. Interacts with RRAGC/RagC GDP-bound and RRAGD/RagD GDP-bound; promoting its recruitment to lysosomal membrane in the presence of nutrients. Interacts with TSC22D1; the interaction is enhanced in the presence of TGF-beta. In terms of processing, sumoylated; does not affect dimerization with MITF. Post-translationally, phosphorylation ar Ser-47 and Ser-321 by MTOR via non-canonical mTORC1 pathway regulates its stability and subcellular location, respectively. When nutrients are present, phosphorylation by MTOR at Ser-47 promotes ubiquitination by the SCF(BTRC) complex, followed by degradation. When nutrients are present, phosphorylation by MTOR at Ser-321 also promotes association with 14-3-3/YWHA adapters and retention in the cytosol. Phosphorylation at Ser-47 plays a more critical role than phosphorylation at Ser-321 for TFE3 inactivation. Inhibition of mTORC1, starvation and lysosomal disruption, promotes dephosphorylation and transcription factor activity. Ubiquitinated by the SCF(BTRC) and SCF(FBXW11) complexes following phosphorylation at Ser-47 by MTOR, leading to its degradation by the proteasome. In terms of tissue distribution, ubiquitous in fetal and adult tissues.

It localises to the cytoplasm. The protein resides in the cytosol. Its subcellular location is the nucleus. The protein localises to the lysosome membrane. Transcription factor that acts as a master regulator of lysosomal biogenesis and immune response. Specifically recognizes and binds E-box sequences (5'-CANNTG-3'); efficient DNA-binding requires dimerization with itself or with another MiT/TFE family member such as TFEB or MITF. Involved in the cellular response to amino acid availability by acting downstream of MTOR: in the presence of nutrients, TFE3 phosphorylation by MTOR promotes its inactivation. Upon starvation or lysosomal stress, inhibition of MTOR induces TFE3 dephosphorylation, resulting in transcription factor activity. Specifically recognizes and binds the CLEAR-box sequence (5'-GTCACGTGAC-3') present in the regulatory region of many lysosomal genes, leading to activate their expression, thereby playing a central role in expression of lysosomal genes. Maintains the pluripotent state of embryonic stem cells by promoting the expression of genes such as ESRRB; mTOR-dependent TFE3 cytosolic retention and inactivation promotes exit from pluripotency. Required to maintain the naive pluripotent state of hematopoietic stem cell; mTOR-dependent cytoplasmic retention of TFE3 promotes the exit of hematopoietic stem cell from pluripotency. TFE3 activity is also involved in the inhibition of neuronal progenitor differentiation. Acts as a positive regulator of browning of adipose tissue by promoting expression of target genes; mTOR-dependent phosphorylation promotes cytoplasmic retention of TFE3 and inhibits browning of adipose tissue. In association with TFEB, activates the expression of CD40L in T-cells, thereby playing a role in T-cell-dependent antibody responses in activated CD4(+) T-cells and thymus-dependent humoral immunity. Specifically recognizes the MUE3 box, a subset of E-boxes, present in the immunoglobulin enhancer. It also binds very well to a USF/MLTF site. Promotes TGF-beta-induced transcription of COL1A2; via its interaction with TSC22D1 at E-boxes in the gene proximal promoter. May regulate lysosomal positioning in response to nutrient deprivation by promoting the expression of PIP4P1. In Homo sapiens (Human), this protein is Transcription factor E3.